The primary structure comprises 512 residues: Glutathione-binding protein GsiB (512 aa).

The first 26 residues, 1–26, serve as a signal peptide directing secretion; the sequence is MARAVHRSGLVALGIATALMASCAFA.

Belongs to the bacterial solute-binding protein 5 family. The complex is composed of two ATP-binding proteins (GsiA), two transmembrane proteins (GsiC and GsiD) and a solute-binding protein (GsiB).

Its subcellular location is the periplasm. Functionally, part of the ABC transporter complex GsiABCD involved in glutathione import. Binds glutathione. The polypeptide is Glutathione-binding protein GsiB (Shigella boydii serotype 4 (strain Sb227)).